The chain runs to 796 residues: Leucine--tRNA ligase (796 aa).

The short motif at 40-51 is the 'HIGH' region element; it reads PYPSASGLHVGH. The 'KMSKS' region signature appears at 569-573; the sequence is KMSKS. K572 provides a ligand contact to ATP.

The protein belongs to the class-I aminoacyl-tRNA synthetase family.

It localises to the cytoplasm. It catalyses the reaction tRNA(Leu) + L-leucine + ATP = L-leucyl-tRNA(Leu) + AMP + diphosphate. This is Leucine--tRNA ligase from Bdellovibrio bacteriovorus (strain ATCC 15356 / DSM 50701 / NCIMB 9529 / HD100).